Here is a 313-residue protein sequence, read N- to C-terminus: Carbamate kinase (313 aa).

Belongs to the carbamate kinase family.

The protein resides in the cytoplasm. The enzyme catalyses hydrogencarbonate + NH4(+) + ATP = carbamoyl phosphate + ADP + H2O + H(+). It functions in the pathway metabolic intermediate metabolism; carbamoyl phosphate degradation; CO(2) and NH(3) from carbamoyl phosphate: step 1/1. The polypeptide is Carbamate kinase (arcC) (Oenococcus oeni (Leuconostoc oenos)).